The primary structure comprises 587 residues: ATP-dependent lipid A-core flippase (587 aa).

The next 5 helical transmembrane spans lie at 31–51 (LIAS…LIYL), 68–88 (LKIM…TNFI), 145–165 (GSLI…AVMF), 169–189 (WELT…ITIV), and 259–279 (VQII…TPLI). Residues 32-315 (IASGIALVFN…LTNVNSQFQR (284 aa)) form the ABC transmembrane type-1 domain. The ABC transporter domain maps to 347–583 (LEFKNVSFAY…NGAYKQLYSM (237 aa)). 381 to 388 (GRSGSGKS) is an ATP binding site.

This sequence belongs to the ABC transporter superfamily. Lipid exporter (TC 3.A.1.106) family. In terms of assembly, homodimer.

The protein resides in the cell inner membrane. It catalyses the reaction ATP + H2O + lipid A-core oligosaccharideSide 1 = ADP + phosphate + lipid A-core oligosaccharideSide 2.. Involved in lipopolysaccharide (LPS) biosynthesis. Translocates lipid A-core from the inner to the outer leaflet of the inner membrane. Transmembrane domains (TMD) form a pore in the inner membrane and the ATP-binding domain (NBD) is responsible for energy generation. This is ATP-dependent lipid A-core flippase from Haemophilus influenzae (strain 86-028NP).